The sequence spans 187 residues: Core-binding factor subunit beta (187 aa).

Ser-10 carries the phosphoserine; by CK2 modification. The disordered stretch occupies residues 139–187; it reads AQQAFEEARRRTREFEDRDRSHREEMEARRQQDPSPGSNLGGGDDLKLR. Over residues 144-170 the composition is skewed to basic and acidic residues; the sequence is EEARRRTREFEDRDRSHREEMEARRQQ. A Phosphoserine; by PKC modification is found at Ser-159.

Belongs to the CBF-beta family. Heterodimer with RUNX1, RUNX2 and RUNX3. Interacts with COPRS. Found in a complex with PRMT5 and RUNX1. As to expression, expressed in all tissues tested. Highest level in thymus, but also abundantly expressed in muscle, lung and brain.

It is found in the nucleus. Functionally, forms the heterodimeric complex core-binding factor (CBF) with RUNX family proteins (RUNX1, RUNX2, and RUNX3). RUNX members modulate the transcription of their target genes through recognizing the core consensus binding sequence 5'-TGTGGT-3', or very rarely, 5'-TGCGGT-3', within their regulatory regions via their runt domain, while CBFB is a non-DNA-binding regulatory subunit that allosterically enhances the sequence-specific DNA-binding capacity of RUNX. The heterodimers bind to the core site of a number of enhancers and promoters, including murine leukemia virus, polyomavirus enhancer, T-cell receptor enhancers, LCK, IL3 and GM-CSF promoters. CBF complexes repress ZBTB7B transcription factor during cytotoxic (CD8+) T cell development. They bind to RUNX-binding sequence within the ZBTB7B locus acting as transcriptional silencer and allowing for cytotoxic T cell differentiation. This Mus musculus (Mouse) protein is Core-binding factor subunit beta (Cbfb).